Consider the following 437-residue polypeptide: UDP-N-acetylmuramate--L-alanine ligase (437 aa).

114 to 120 (GTHGKTS) lines the ATP pocket.

Belongs to the MurCDEF family.

It localises to the cytoplasm. It catalyses the reaction UDP-N-acetyl-alpha-D-muramate + L-alanine + ATP = UDP-N-acetyl-alpha-D-muramoyl-L-alanine + ADP + phosphate + H(+). It functions in the pathway cell wall biogenesis; peptidoglycan biosynthesis. Its function is as follows. Cell wall formation. In Lactobacillus johnsonii (strain CNCM I-12250 / La1 / NCC 533), this protein is UDP-N-acetylmuramate--L-alanine ligase.